The following is a 284-amino-acid chain: MEMO1 family protein MmarC6_1286 (284 aa).

It belongs to the MEMO1 family.

The chain is MEMO1 family protein MmarC6_1286 from Methanococcus maripaludis (strain C6 / ATCC BAA-1332).